The primary structure comprises 354 residues: Uroporphyrinogen decarboxylase (354 aa).

Substrate is bound by residues 27-31, Phe46, Asp77, Tyr154, Ser209, and His327; that span reads RQAGR.

It belongs to the uroporphyrinogen decarboxylase family. Homodimer.

It is found in the cytoplasm. It carries out the reaction uroporphyrinogen III + 4 H(+) = coproporphyrinogen III + 4 CO2. It functions in the pathway porphyrin-containing compound metabolism; protoporphyrin-IX biosynthesis; coproporphyrinogen-III from 5-aminolevulinate: step 4/4. In terms of biological role, catalyzes the decarboxylation of four acetate groups of uroporphyrinogen-III to yield coproporphyrinogen-III. In Pseudomonas syringae pv. tomato (strain ATCC BAA-871 / DC3000), this protein is Uroporphyrinogen decarboxylase.